The following is a 1568-amino-acid chain: Kielin/chordin-like protein (1568 aa).

Residues 1–23 (MAGVGAAALSLLLHLGALALAAG) form the signal peptide. Residues 27–49 (GAVPREPPGQQTTAHSSVLAGNS) form a disordered region. Residues 35–49 (GQQTTAHSSVLAGNS) are compositionally biased toward polar residues. The stretch at 60-87 (LGRLEAAVMELREQNKDLQTRVRQLESC) forms a coiled coil. 16 VWFC domains span residues 136 to 193 (RGCS…PICR), 194 to 253 (PGCD…PTCQ), 253 to 312 (QGCT…PVCD), 312 to 370 (DGCF…PVCD), 426 to 485 (PACE…PSCD), 485 to 544 (DSCT…PRCP), 544 to 602 (PDCI…NDCS), 602 to 661 (SGCA…PQCP), 667 to 725 (AGCP…PSCD), 725 to 782 (DGCL…PDCD), 782 to 841 (DGCE…PTCQ), 900 to 959 (HSCL…PRCR), 959 to 1017 (RGCL…PQCS), 1017 to 1085 (SDCE…PTCA), 1082 to 1145 (PTCA…PVCR), and 1149 to 1209 (QSCV…PRCL). Asn340 is a glycosylation site (N-linked (GlcNAc...) asparagine). Asn499 is a glycosylation site (N-linked (GlcNAc...) asparagine). A glycan (N-linked (GlcNAc...) asparagine) is linked at Asn1090. The VWFD domain occupies 1213–1389 (ASCMAFGDPH…EGLWPGRPCS (177 aa)). 2 disulfide bridges follow: Cys1215–Cys1347 and Cys1237–Cys1388. One can recognise a TIL domain in the interval 1483–1543 (CPLERGFVFD…EAHCIPPEAC (61 aa)).

As to quaternary structure, interacts with BMP7 and, by doing so, enhances binding to the type I receptors that contains cytoplasmic serine/threonine protein kinase domains. Also able to interact with activin-A and TGFB1.

The protein resides in the secreted. Enhances bone morphogenetic protein (BMP) signaling in a paracrine manner. In contrast, it inhibits both the activin-A and TGFB1-mediated signaling pathways. The chain is Kielin/chordin-like protein from Homo sapiens (Human).